The following is a 446-amino-acid chain: C4-dicarboxylate transport protein 2 (446 aa).

The next 10 helical transmembrane spans lie at 7 to 26, 46 to 64, 77 to 99, 152 to 171, 192 to 211, 221 to 243, 291 to 313, 318 to 340, 353 to 375, and 381 to 403; these read PLFGQVLIALALGIALGIWA, MLIAPIVFSVVVVGICGAG, VIYFEVVTTIALALGIALAYAFG, ILQVLLVSILFGCALSLLGE, AVVIRLAPLGVLGAVAFTVG, LGFLVLLFYAAVAVFVVVVLGGI, VVGLVIPTGYSFNLDAFSIYLTL, IAQATNTPLALSDLLLILGVALI, IVILAATLSVIPAIPAIGLVLVL, and IGIARALGNLLGNCVATVVIAAW.

This sequence belongs to the dicarboxylate/amino acid:cation symporter (DAACS) (TC 2.A.23) family.

It is found in the cell inner membrane. Its function is as follows. Responsible for the transport of dicarboxylates such as succinate, fumarate, and malate from the periplasm across the membrane. The chain is C4-dicarboxylate transport protein 2 (dctA2) from Ralstonia nicotianae (strain ATCC BAA-1114 / GMI1000) (Ralstonia solanacearum).